The chain runs to 425 residues: Cytokine receptor-like factor 1 (425 aa).

The signal sequence occupies residues 1–33 (MPAGRPGPVAQSARRPPRPLSSLWSPLLLCVLG). The region spanning 35–134 (PRGGSGAHTA…SILAGSCLYV (100 aa)) is the Ig-like C2-type domain. 3 N-linked (GlcNAc...) asparagine glycosylation sites follow: Asn95, Asn107, and Asn143. Fibronectin type-III domains follow at residues 140-235 (KPFN…VLDV) and 240-344 (PPPD…TPRS). An intrachain disulfide couples Cys146 to Cys156. Asn171 carries an N-linked (GlcNAc...) asparagine glycan. Cysteines 187 and 198 form a disulfide. Phosphoserine is present on Ser222. Asn295 is a glycosylation site (N-linked (GlcNAc...) asparagine). Residues 330-334 (WSEWS) carry the WSXWS motif motif. The disordered stretch occupies residues 335–366 (HPTAASTPRSERPGPGGGVCEPRGGEPSSGPV). An N-linked (GlcNAc...) asparagine glycan is attached at Asn385. The disordered stretch occupies residues 402–425 (HKTRNQDEGILPSGRRGAARGPAG). Residues 415–425 (GRRGAARGPAG) show a composition bias toward low complexity.

This sequence belongs to the type I cytokine receptor family. Type 3 subfamily. In terms of assembly, forms covalent di- and tetramers. Forms a heteromeric complex with cardiotrophin-like cytokine CLCF1/CLC; the CRLF1-CLCF1 complex is a ligand for the ciliary neurotrophic factor receptor/CNTFR. The CRLF1-CLCF1 heterodimer, as well as tripartite signaling complex formed by CRLF1, CLCF1 and CNTFR bind SORL1 (via N-terminal ectodomain); within this complex, the interaction is mediated predominantly by the CRLF1 moiety. Widely expressed in the embryo. Not detected in the brain of adult mice.

The protein localises to the secreted. In complex with CLCF1, forms a heterodimeric neurotropic cytokine that plays a crucial role during neuronal development. Plays a role in the initiation and/or maintenance of suckling in neonatal mice. May also play a regulatory role in the immune system. This is Cytokine receptor-like factor 1 (Crlf1) from Mus musculus (Mouse).